The following is a 757-amino-acid chain: Chloride anion exchanger (757 aa).

Over 1-71 (MIEAIGNQYV…SWLPAYKIKE (71 aa)) the chain is Cytoplasmic. Residues 72-92 (WLLSDIVSGISTGLVAVLQGL) form a helical membrane-spanning segment. Residue Ala93 is a topological domain, extracellular. Residues 94–114 (FALLVNIPPAYGLYAAFFPVI) traverse the membrane as a helical segment. Residues 115–124 (TYFFLGTSRH) are Cytoplasmic-facing. A helical membrane pass occupies residues 125 to 145 (ISVGPFPVLSMMVGVVVTRVA). At 146 to 176 (SGSDTSPALSSSSAENDSMIEEKVMVAASVT) the chain is on the extracellular side. The N-linked (GlcNAc...) asparagine glycan is linked to Asn161. A helical transmembrane segment spans residues 177 to 197 (VLSGIIQLLLGVLQIGFVVIY). At 198-201 (LSES) the chain is on the cytoplasmic side. A helical transmembrane segment spans residues 202 to 222 (LISGFTTAAAIHVLVSQLKFM). The Extracellular segment spans residues 223 to 250 (LQLTVPAHSDPFSIFKVLESVFSQIQKT). A helical membrane pass occupies residues 251–271 (NIADLVTSVIILVVVFVVKEI). Over 272-278 (NQRYRSK) the chain is Cytoplasmic. A helical transmembrane segment spans residues 279–299 (LPVPIPIELIMTVIATGISYG). At 300-335 (CNFEQRFGVAVVGNMSLGFQPPITPSVEVFQDTIGD) the chain is on the extracellular side. Residues 336-356 (CFGIAIVGFAVAFSVASVYSL) form a helical membrane-spanning segment. Over 357–367 (KYDYPIDGNQE) the chain is Cytoplasmic. Residues 368-388 (LIALGVSNIFTGAFKGFAGST) traverse the membrane as a helical segment. Residues 389-404 (ALSRSGVQESTGGKTQ) lie on the Extracellular side of the membrane. Residues 405 to 425 (VAGLLSAVIVLIVIVAIGFLL) traverse the membrane as a helical segment. Residues 426–462 (QPLQKSVLAALALGNLKGMLMQFAEIGRLWKKDKYDC) lie on the Cytoplasmic side of the membrane. Residues 463–483 (LIWIMTFIFAIVLGLGLGLAA) traverse the membrane as a helical segment. Residues 484–757 (SVAFQLLTIV…ECQVPVETKF (274 aa)) lie on the Extracellular side of the membrane. The STAS domain occupies 518-713 (NYADVYEPEG…LTIHDAILHI (196 aa)). The PDZ-binding signature appears at 754–757 (ETKF).

Belongs to the SLC26A/SulP transporter (TC 2.A.53) family. Interacts with PDZK1, CFTR, SLC26A6 and NHERF1. Interacts (via PDZ-binding motif) with NHERF4 (via the third PDZ domain); interaction leads to decreased expression of SLC26A3 on the cell membrane resulting in its reduced exchanger activity. In terms of processing, N-glycosylation is required for efficient cell surface expression, and protection from proteolytic degradation.

It localises to the apical cell membrane. The protein resides in the membrane. The protein localises to the cell membrane. The catalysed reaction is hydrogencarbonate(in) + 2 chloride(out) = hydrogencarbonate(out) + 2 chloride(in). In terms of biological role, mediates chloride-bicarbonate exchange with a chloride bicarbonate stoichiometry of 2:1 in the intestinal epithelia. Plays a role in the chloride and bicarbonate homeostasis during sperm epididymal maturation and capacitation. In Rattus norvegicus (Rat), this protein is Chloride anion exchanger (Slc26a3).